A 159-amino-acid polypeptide reads, in one-letter code: MRCPFCRHDDTQVVDSRVSEDGAAIRRRRRCSACDKRFTTYERVELSLPFVVKKDGSRTEFDRRKIVASMQLALRKRPVAADAIDAAVARIEYQLLATGEREVRSEKLGELVMNELRGLDTIAYVRFASVYRRFEDVSEFADVIEEFRRASPAKTPRKR.

The segment at 3-34 is a zinc-finger region; sequence CPFCRHDDTQVVDSRVSEDGAAIRRRRRCSAC. Residues 49–139 form the ATP-cone domain; sequence PFVVKKDGSR…VYRRFEDVSE (91 aa).

Belongs to the NrdR family. Zn(2+) is required as a cofactor.

Negatively regulates transcription of bacterial ribonucleotide reductase nrd genes and operons by binding to NrdR-boxes. The chain is Transcriptional repressor NrdR from Burkholderia cenocepacia (strain ATCC BAA-245 / DSM 16553 / LMG 16656 / NCTC 13227 / J2315 / CF5610) (Burkholderia cepacia (strain J2315)).